Reading from the N-terminus, the 399-residue chain is Tryptophan synthase beta chain (399 aa).

N6-(pyridoxal phosphate)lysine is present on K86.

The protein belongs to the TrpB family. As to quaternary structure, tetramer of two alpha and two beta chains. Requires pyridoxal 5'-phosphate as cofactor.

The catalysed reaction is (1S,2R)-1-C-(indol-3-yl)glycerol 3-phosphate + L-serine = D-glyceraldehyde 3-phosphate + L-tryptophan + H2O. Its pathway is amino-acid biosynthesis; L-tryptophan biosynthesis; L-tryptophan from chorismate: step 5/5. Its function is as follows. The beta subunit is responsible for the synthesis of L-tryptophan from indole and L-serine. The polypeptide is Tryptophan synthase beta chain (trpB) (Buchnera aphidicola subsp. Schizaphis graminum (strain Sg)).